We begin with the raw amino-acid sequence, 344 residues long: Protein pelota homolog (344 aa).

Belongs to the eukaryotic release factor 1 family. Pelota subfamily. Monomer. A divalent metal cation is required as a cofactor.

It localises to the cytoplasm. In terms of biological role, may function in recognizing stalled ribosomes, interact with stem-loop structures in stalled mRNA molecules, and effect endonucleolytic cleavage of the mRNA. May play a role in the release non-functional ribosomes and degradation of damaged mRNAs. Has endoribonuclease activity. The polypeptide is Protein pelota homolog (Saccharolobus islandicus (strain M.16.27) (Sulfolobus islandicus)).